A 62-amino-acid chain; its full sequence is MLQSMVQTGPEFLHQGTHLNLEFPAIQELSLTFLRKPIYWRIGMPNTSTLVIPKKMSLLLLL.

This is an uncharacterized protein from Potato leafroll virus (strain Potato/Scotland/strain 1/1984) (PLrV).